We begin with the raw amino-acid sequence, 124 residues long: Late histone H2B.2.2 (124 aa).

Residues 1–32 form a disordered region; that stretch reads MPAKQTSGKGAKKAGKAKGRPSGASKTRRRKR. Residues 10–19 show a composition bias toward basic residues; it reads GAKKAGKAKG. A glycan (O-linked (GlcNAc) serine) is linked at S111. Residue K119 forms a Glycyl lysine isopeptide (Lys-Gly) (interchain with G-Cter in ubiquitin) linkage.

Belongs to the histone H2B family. The nucleosome is a histone octamer containing two molecules each of H2A, H2B, H3 and H4 assembled in one H3-H4 heterotetramer and two H2A-H2B heterodimers. The octamer wraps approximately 147 bp of DNA. Monoubiquitination of Lys-119 gives a specific tag for epigenetic transcriptional activation and is also prerequisite for histone H3 'Lys-4' and 'Lys-79' methylation. In terms of processing, glcNAcylation at Ser-111 promotes monoubiquitination of Lys-119. It fluctuates in response to extracellular glucose, and associates with transcribed genes.

It localises to the nucleus. Its subcellular location is the chromosome. Core component of nucleosome. Nucleosomes wrap and compact DNA into chromatin, limiting DNA accessibility to the cellular machineries which require DNA as a template. Histones thereby play a central role in transcription regulation, DNA repair, DNA replication and chromosomal stability. DNA accessibility is regulated via a complex set of post-translational modifications of histones, also called histone code, and nucleosome remodeling. The sequence is that of Late histone H2B.2.2 from Psammechinus miliaris (Green sea urchin).